Consider the following 383-residue polypeptide: Probable cell wall hydrolase LytN (383 aa).

Positions 1 to 49 (MFIYYCKECSIMNKQQSKVRYSIRKVSIGILSISIGMFLALGMSNKAYA) are cleaved as a signal peptide. In terms of domain architecture, LysM spans 175–219 (QIYTVKKGDTLSAIALKYKTTVSNIQNTNNIANPNLIFIGQKLKV). A Peptidase C51 domain is found at 241 to 378 (NSSTLNYLKT…NYENDMIFIR (138 aa)).

It localises to the secreted. Its function is as follows. Probably involved in peptidoglycan hydrolysis. The polypeptide is Probable cell wall hydrolase LytN (lytN) (Staphylococcus aureus (strain Mu50 / ATCC 700699)).